The sequence spans 517 residues: UDP-N-acetylmuramoyl-tripeptide--D-alanyl-D-alanine ligase (517 aa).

Gly138–Ser144 serves as a coordination point for ATP.

The protein belongs to the MurCDEF family. MurF subfamily.

The protein localises to the cytoplasm. The enzyme catalyses D-alanyl-D-alanine + UDP-N-acetyl-alpha-D-muramoyl-L-alanyl-gamma-D-glutamyl-meso-2,6-diaminopimelate + ATP = UDP-N-acetyl-alpha-D-muramoyl-L-alanyl-gamma-D-glutamyl-meso-2,6-diaminopimeloyl-D-alanyl-D-alanine + ADP + phosphate + H(+). Its pathway is cell wall biogenesis; peptidoglycan biosynthesis. Involved in cell wall formation. Catalyzes the final step in the synthesis of UDP-N-acetylmuramoyl-pentapeptide, the precursor of murein. The polypeptide is UDP-N-acetylmuramoyl-tripeptide--D-alanyl-D-alanine ligase (Mycobacterium leprae (strain TN)).